Here is a 428-residue protein sequence, read N- to C-terminus: UPF0229 protein YeaH (428 aa).

The segment covering 77–90 has biased composition (basic and acidic residues); it reads PGNDHFIQNDRIER. A disordered region spans residues 77–111; sequence PGNDHFIQNDRIERPQSGGGGGSGSGQGQASQDGE. A compositionally biased stretch (gly residues) spans 93–103; sequence SGGGGGSGSGQ.

It belongs to the UPF0229 family.

In Salmonella typhi, this protein is UPF0229 protein YeaH.